Reading from the N-terminus, the 83-residue chain is High-potential iron-sulfur protein (83 aa).

The [4Fe-4S] cluster site is built by C43, C46, C61, and C75.

It belongs to the high-potential iron-sulfur protein (HiPIP) family. In terms of assembly, homodimer.

Specific class of high-redox-potential 4Fe-4S ferredoxins. Functions in anaerobic electron transport in most purple and in some other photosynthetic bacteria and in at least one genus (Paracoccus) of halophilic, denitrifying bacteria. The chain is High-potential iron-sulfur protein (hip) from Thermochromatium tepidum (Chromatium tepidum).